Here is a 1025-residue protein sequence, read N- to C-terminus: Transcription factor tau 131 kDa subunit (1025 aa).

Residues 1–26 are compositionally biased toward basic and acidic residues; it reads MAAGKLKKEQQNQSAERESADTGKVN. The disordered stretch occupies residues 1–71; sequence MAAGKLKKEQ…EDEYNSERDS (71 aa). Residues 46 to 65 are compositionally biased toward acidic residues; it reads DEEYDDEDVPHDLQLSEDEY. TPR repeat units follow at residues 128–161, 162–195, 196–229, 230–263, and 264–297; these read VAQLLSQANEAFVRNDLQVAERLFNEVIKKDARN, FAAYETLGDIYQLQGRLNDCCNSWFLAAHLNASD, WEFWKIVAILSADLDHVRQAIYCFSRVISLNPME, WESIYRRSMLYKKTGQLARALDGFQRLYMYNPYD, and ANILRELAILYVDYDRIEDSIELYMKVFNANVER. Residues 128 to 569 are sufficient to bind BDP1; it reads VAQLLSQANE…VDVVEMRKHQ (442 aa). A disordered region spans residues 309-334; it reads LDSSDEESAAEGEDADEKEPLEQDED. Position 311 is a phosphoserine (Ser311). The segment covering 311 to 325 has biased composition (acidic residues); it reads SSDEESAAEGEDADE. TPR repeat units lie at residues 432 to 465, 467 to 501, 502 to 535, 536 to 569, 875 to 908, and 959 to 992; these read IDIRVRLGLLRLNTDNLVEALNHFQCLYDETFSD, ADLYFEAATALTRAEKYKEAIDFFTPLLSLEEWRT, TDVFKPLARCYKEIESYETAKEFYELAIKSEPDD, LDIRVSLAEVYYRLNDPETFKHMLVDVVEMRKHQ, PYLYYIYAVLLYSSRGFLSALQYLTRLEEDIPDD, and QEADYNLGRAFHLIGLVSIAIEYYNRVLENYDDG.

In terms of assembly, component of the TFIIIC complex composed of TFC1, TFC3, TFC4, TFC6, TFC7 and TFC8. The subunits are organized in two globular domains, tauA and tauB, connected by a proteolysis-sensitive and flexible linker. Interacts with TFC1, TFC3, TFC6, TFIIIB subunits BRF1 and BDP1, and with RNA polymerase III subunit RPC10. In terms of processing, phosphorylated.

The protein localises to the nucleus. Functionally, TFIIIC mediates tRNA and 5S RNA gene activation by binding to intragenic promoter elements. Upstream of the transcription start site, TFIIIC assembles the initiation complex TFIIIB-TFIIIC-tDNA, which is sufficient for RNA polymerase III recruitment and function. Part of the tauA domain of TFIIIC that binds boxA DNA promoter sites of tRNA and similar genes. TFC4 is the TFIIIB-assembling subunit of TFIIIC and essential for viability. This is Transcription factor tau 131 kDa subunit (TFC4) from Saccharomyces cerevisiae (strain ATCC 204508 / S288c) (Baker's yeast).